A 100-amino-acid polypeptide reads, in one-letter code: Signal recognition particle 19 kDa protein (100 aa).

It belongs to the SRP19 family. In terms of assembly, part of the signal recognition particle protein translocation system, which is composed of SRP and FtsY. Archaeal SRP consists of a 7S RNA molecule of 300 nucleotides and two protein subunits: SRP54 and SRP19.

It is found in the cytoplasm. In terms of biological role, involved in targeting and insertion of nascent membrane proteins into the cytoplasmic membrane. Binds directly to 7S RNA and mediates binding of the 54 kDa subunit of the SRP. In Caldivirga maquilingensis (strain ATCC 700844 / DSM 13496 / JCM 10307 / IC-167), this protein is Signal recognition particle 19 kDa protein.